A 269-amino-acid chain; its full sequence is Diadenylate cyclase (269 aa).

Positions 109–266 (RSGIYDLFAN…GGKMILEIDP (158 aa)) constitute a DAC domain.

This sequence belongs to the adenylate cyclase family. DacZ subfamily. It depends on Mn(2+) as a cofactor.

The enzyme catalyses 2 ATP = 3',3'-c-di-AMP + 2 diphosphate. Its function is as follows. Diadenylate cyclase that catalyzes the condensation of 2 ATP molecules into cyclic di-AMP (c-di-AMP). c-di-AMP is a second messenger for intracellular signal transduction involved in the control of important regulatory processes such as osmoregulation. Is essential for H.volcanii. Overexpression of DacZ leads to cell death, suggesting the need for tight regulation of c-di-AMP levels. Cannot use GTP as substrate. This Haloferax volcanii (strain ATCC 29605 / DSM 3757 / JCM 8879 / NBRC 14742 / NCIMB 2012 / VKM B-1768 / DS2) (Halobacterium volcanii) protein is Diadenylate cyclase.